The following is a 180-amino-acid chain: uncharacterized protein (180 aa).

The signal sequence occupies residues 1-22 (MKRSIIAAAVFSSFFMSAGVFA).

It belongs to the fimbrial protein family.

Its function is as follows. Part of the yehABCD fimbrial operon. Could contribute to adhesion to various surfaces in specific environmental niches. This is an uncharacterized protein from Escherichia coli (strain K12).